Here is a 1293-residue protein sequence, read N- to C-terminus: Phosphoribosylformylglycinamidine synthase (1293 aa).

ATP is bound by residues 305–316 (GAATGSGGEIRD) and Ala676. The segment at 305 to 327 (GAATGSGGEIRDEGATGRGSKPK) is disordered. Residues Asp677, Glu716, Asn720, and Asp884 each contribute to the Mg(2+) site. Ser886 is a binding site for ATP. Residues 1040–1293 (MAILREQGVN…MFRNARVNLG (254 aa)) enclose the Glutamine amidotransferase type-1 domain. Cys1133 (nucleophile) is an active-site residue. Active-site residues include His1258 and Glu1260.

The protein in the N-terminal section; belongs to the FGAMS family. Monomer.

Its subcellular location is the cytoplasm. The catalysed reaction is N(2)-formyl-N(1)-(5-phospho-beta-D-ribosyl)glycinamide + L-glutamine + ATP + H2O = 2-formamido-N(1)-(5-O-phospho-beta-D-ribosyl)acetamidine + L-glutamate + ADP + phosphate + H(+). It functions in the pathway purine metabolism; IMP biosynthesis via de novo pathway; 5-amino-1-(5-phospho-D-ribosyl)imidazole from N(2)-formyl-N(1)-(5-phospho-D-ribosyl)glycinamide: step 1/2. Phosphoribosylformylglycinamidine synthase involved in the purines biosynthetic pathway. Catalyzes the ATP-dependent conversion of formylglycinamide ribonucleotide (FGAR) and glutamine to yield formylglycinamidine ribonucleotide (FGAM) and glutamate. In Shewanella sp. (strain MR-4), this protein is Phosphoribosylformylglycinamidine synthase.